Consider the following 479-residue polypeptide: MDATSAPHRIPPEMPQYGEDYHIFEMMQSMLEQLLIHQPEDPISFMISHLRRNNDNVPRVVILGPPASGKTTIAMWLCKHLNSNLITKENLLEREFSLLSLEAKKHYQVYKRVPNSTLVSLVQERLNEDDCLRRGWILDGIPERREQALMIQTLGLAPKHVIVLSAPDSVLIERNVGKRIDPVTGEIYHTTFDWPPELEIQNRLIQPEGISEIDTAKKLLEYHRHIIRILPSYPKILKTISSDQPCVDVFYQALTYVQSGHRCNAPFTPKVLLCGPMGCGKKLQAALLSQKYGLVNISCGQLLKEAMAAESSLGDLIEPFFEKRMTVPDSIITRVLTERLKQQDCIQKGWVLHGFPRDLDQARLLNSMGYSPNRVFFLNVPLDSILERLTLRRTDPVTGERFHLMYKPPPTIEVQARLLQNPKDSEEYIKLQTDLFYRNSGDLEQYYDRAIIVNGDQDPYTVFEYIESGIINPLPRKVT.

Adenylate kinase regions lie at residues 58-258 (PRVV…TYVQ) and 269-471 (PKVL…SGII). Residue 67–72 (ASGKTT) participates in ATP binding. The tract at residues 87–113 (TKENLLEREFSLLSLEAKKHYQVYKRV) is NMP 1. Residues 140 to 143 (GIPE), glutamine 147, and arginine 203 each bind AMP. The segment at 177–206 (GKRIDPVTGEIYHTTFDWPPELEIQNRLIQ) is LID 1. 278-283 (GCGKKL) serves as a coordination point for ATP. The segment at 298 to 327 (SCGQLLKEAMAAESSLGDLIEPFFEKRMTV) is NMP 2. Residues 325-327 (MTV), 354-357 (GFPR), and glutamine 361 contribute to the AMP site. The interval 391–424 (LRRTDPVTGERFHLMYKPPPTIEVQARLLQNPKD) is LID 2. Arginine 392 provides a ligand contact to ATP.

This sequence belongs to the adenylate kinase family. As to quaternary structure, interacts with CFAP45 and CFAP52; CFAP45 and AK8 dimerization may create a cavity at the interface of the dimer that can accommodate AMP.

Its subcellular location is the cytoplasm. It localises to the cytosol. The protein localises to the cytoskeleton. It is found in the cilium axoneme. The catalysed reaction is AMP + ATP = 2 ADP. The enzyme catalyses a 2'-deoxyribonucleoside 5'-diphosphate + ATP = a 2'-deoxyribonucleoside 5'-triphosphate + ADP. It carries out the reaction a ribonucleoside 5'-diphosphate + ATP = a ribonucleoside 5'-triphosphate + ADP. Nucleoside monophosphate (NMP) kinase that catalyzes the reversible transfer of the terminal phosphate group between nucleoside triphosphates and monophosphates. Has highest activity toward AMP, and weaker activity toward dAMP, CMP and dCMP. Also displays broad nucleoside diphosphate kinase activity. This Rattus norvegicus (Rat) protein is Adenylate kinase 8 (Ak8).